The chain runs to 64 residues: MMIPVRCFTCGNVVGEHWEEFKERAREGDEDPGKVLDELGVDRHCCRRMMVSHRDLVDVVSPYQ.

Zn(2+) contacts are provided by Cys7, Cys10, Cys45, and Cys46.

Belongs to the archaeal Rpo10/eukaryotic RPB10 RNA polymerase subunit family. Part of the RNA polymerase complex. The cofactor is Zn(2+).

It is found in the cytoplasm. It catalyses the reaction RNA(n) + a ribonucleoside 5'-triphosphate = RNA(n+1) + diphosphate. In terms of biological role, DNA-dependent RNA polymerase (RNAP) catalyzes the transcription of DNA into RNA using the four ribonucleoside triphosphates as substrates. The chain is DNA-directed RNA polymerase subunit Rpo10 from Halorubrum lacusprofundi (strain ATCC 49239 / DSM 5036 / JCM 8891 / ACAM 34).